A 213-amino-acid chain; its full sequence is High frequency lysogenization protein HflD homolog (213 aa).

A coiled-coil region spans residues 79–126 (QGLNAELTRYTLSLMVLERKLSSAKGALDTLGNRINGLQRQLEHFDLQ).

It belongs to the HflD family.

Its subcellular location is the cytoplasm. It localises to the cell inner membrane. The protein is High frequency lysogenization protein HflD homolog of Shigella dysenteriae serotype 1 (strain Sd197).